The chain runs to 310 residues: Olfactory receptor 8G3 (310 aa).

The Extracellular portion of the chain corresponds to 1–25 (MDPGNHSSVTESILAGLSEQPELQL). Asn5 is a glycosylation site (N-linked (GlcNAc...) asparagine). A helical membrane pass occupies residues 26–46 (RLFLLFLGICVVTVVGNLGMI). Over 47–54 (TLIGLSSH) the chain is Cytoplasmic. A helical membrane pass occupies residues 55-75 (LHTPMYYFLSSLSFIDFCHST). The Extracellular segment spans residues 76–99 (VITPKMLVNFATEKNIISYPECMA). Cys97 and Cys189 form a disulfide bridge. The chain crosses the membrane as a helical span at residues 100-120 (QLYLFSIFAIAECHMLAAMAY). Residues 121-139 (DCYVAICSPLLYNVIMSYH) lie on the Cytoplasmic side of the membrane. A helical transmembrane segment spans residues 140-160 (HCFWLTVGVYILGILGSTIHT). Topologically, residues 161–197 (SFMLRLFLCKTNVINHYFCDLFPLLGLSCSSTYINEL) are extracellular. The helical transmembrane segment at 198–217 (LVLVLSAFNILMPALTILAS) threads the bilayer. At 218 to 237 (YIFIIASILRIHSTEGRSKA) the chain is on the cytoplasmic side. Residues 238 to 258 (FSTCSSHILAVAVFFGSAAFM) traverse the membrane as a helical segment. The Extracellular segment spans residues 259–271 (YLQPSSVSSMDQR). Residues 272 to 292 (KVSSVFYTTIVPMLNPLIYSL) traverse the membrane as a helical segment. Residues 293 to 310 (RNKDVKLAVKKILHQTAC) lie on the Cytoplasmic side of the membrane.

This sequence belongs to the G-protein coupled receptor 1 family.

Its subcellular location is the cell membrane. Odorant receptor. The sequence is that of Olfactory receptor 8G3 from Homo sapiens (Human).